The sequence spans 252 residues: tRNA (guanine-N(1)-)-methyltransferase (252 aa).

S-adenosyl-L-methionine is bound by residues G110 and V130–L135.

The protein belongs to the RNA methyltransferase TrmD family. As to quaternary structure, homodimer.

The protein resides in the cytoplasm. It carries out the reaction guanosine(37) in tRNA + S-adenosyl-L-methionine = N(1)-methylguanosine(37) in tRNA + S-adenosyl-L-homocysteine + H(+). Functionally, specifically methylates guanosine-37 in various tRNAs. The polypeptide is tRNA (guanine-N(1)-)-methyltransferase (Magnetococcus marinus (strain ATCC BAA-1437 / JCM 17883 / MC-1)).